A 286-amino-acid polypeptide reads, in one-letter code: Shikimate dehydrogenase (NADP(+)) (286 aa).

Shikimate is bound by residues 19–21 and T66; that span reads SLS. The active-site Proton acceptor is the K70. Shikimate contacts are provided by N91 and D107. Residues 129 to 133 and L229 contribute to the NADP(+) site; that span reads GSGGA. Y231 provides a ligand contact to shikimate. G252 provides a ligand contact to NADP(+).

It belongs to the shikimate dehydrogenase family. In terms of assembly, homodimer.

The enzyme catalyses shikimate + NADP(+) = 3-dehydroshikimate + NADPH + H(+). The protein operates within metabolic intermediate biosynthesis; chorismate biosynthesis; chorismate from D-erythrose 4-phosphate and phosphoenolpyruvate: step 4/7. In terms of biological role, involved in the biosynthesis of the chorismate, which leads to the biosynthesis of aromatic amino acids. Catalyzes the reversible NADPH linked reduction of 3-dehydroshikimate (DHSA) to yield shikimate (SA). The polypeptide is Shikimate dehydrogenase (NADP(+)) (Prochlorococcus marinus (strain MIT 9215)).